A 611-amino-acid chain; its full sequence is Rho-related BTB domain-containing protein 3 (611 aa).

Residues 1-175 form a rho-like region; the sequence is MSIHIVALGN…KELGATYLEL (175 aa). BTB domains lie at 254–356 and 420–487; these read VDVV…QWEE and ADVV…CPAG. Residues 420-611 are interaction with Rab9; it reads ADVVFEIQGA…HSRKCRCLVM (192 aa).

As to quaternary structure, interacts with RAB9A and RAB9B (at lower level compared to RAB9A-binding). Interacts with M6PRBP1/TIP47.

It localises to the golgi apparatus. Its function is as follows. Rab9-regulated ATPase required for endosome to Golgi transport. Involved in transport vesicle docking at the Golgi complex, possibly by participating in release M6PRBP1/TIP47 from vesicles to permit their efficient docking and fusion at the Golgi. Specifically binds Rab9, but not other Rab proteins. Has low intrinsic ATPase activity due to autoinhibition, which is relieved by Rab9. This chain is Rho-related BTB domain-containing protein 3 (Rhobtb3), found in Mus musculus (Mouse).